The sequence spans 649 residues: Transmembrane and coiled-coil domains protein 1 (649 aa).

An N-acetylmethionine modification is found at M1. Disordered stretches follow at residues 1–37, 58–83, 110–166, and 197–222; these read MEPS…LSKM, HQRR…EVDL, RVPP…PTSS, and LAQT…GIPD. Over 1-587 the chain is Cytoplasmic; the sequence is MEPSGSEQLY…ARNLLGKLIN (587 aa). Residues 20-34 are compositionally biased toward basic and acidic residues; that stretch reads QDAEARRQTESEQKL. A compositionally biased stretch (polar residues) spans 64–75; the sequence is SVSPHDVQQIQT. Residues 113–125 show a composition bias toward basic residues; the sequence is PKMKRGTSLHSRR. Positions 156–166 are enriched in low complexity; that stretch reads SSSTTDAPTSS. The segment covering 197–214 has biased composition (polar residues); it reads LAQTSSAVASSTDGSIHT. The stretch at 224-310 forms a coiled coil; the sequence is QRTKAAIAHL…KLREVEQNGI (87 aa). Phosphoserine is present on residues S378 and S410. The tract at residues 411–433 is disordered; the sequence is PKYGSEEDCSSATSGSVGANSTT. Residues 420-433 are compositionally biased toward polar residues; sequence SSATSGSVGANSTT. Residues 457–566 are a coiled coil; sequence ALLHEVQEIR…KMELQQQQQQ (110 aa). The next 2 helical transmembrane spans lie at 588 to 608 and 621 to 641; these read ILLA…NCVV and LFLV…FSYV. The Cytoplasmic portion of the chain corresponds to 642-649; it reads DRLFSPPR.

It belongs to the TEX28 family. In terms of assembly, may form homodimers and heterodimers with TMCC2 or TMCC3 via the coiled-coil domains. Interacts with ribosomal proteins RPL4 and RPS6.

It is found in the endoplasmic reticulum membrane. Its function is as follows. Endoplasmic reticulum membrane protein that promotes endoplasmic reticulum-associated endosome fission. Localizes to contact sites between the endoplasmic reticulum and endosomes and acts by promoting recruitment of the endoplasmic reticulum to endosome tubules for fission. Endosome membrane fission of early and late endosomes is essential to separate regions destined for lysosomal degradation from carriers to be recycled to the plasma membrane. This is Transmembrane and coiled-coil domains protein 1 (Tmcc1) from Mus musculus (Mouse).